Here is a 354-residue protein sequence, read N- to C-terminus: Cellular communication network factor 6 (354 aa).

The first 23 residues, Met1–Gly23, serve as a signal peptide directing secretion. An IGFBP N-terminal domain is found at Arg44 to Leu117. 13 disulfide bridges follow: Cys48–Cys72, Cys52–Cys74, Cys54–Cys75, Cys61–Cys78, Cys86–Cys100, Cys92–Cys114, Cys209–Cys238, Cys219–Cys223, Cys247–Cys252, Cys268–Cys305, Cys285–Cys319, Cys296–Cys335, and Cys299–Cys337. Residues Lys208 to Ser253 form the TSP type-1 domain. Residues Cys268–Arg342 enclose the CTCK domain. N-linked (GlcNAc...) asparagine glycosylation occurs at Asn308.

The protein belongs to the CCN family.

The protein localises to the secreted. The protein resides in the mitochondrion. Its function is as follows. Plays a role in mitochondrial electron transport and mitochondrial respiration. This chain is Cellular communication network factor 6, found in Mus musculus (Mouse).